Here is a 325-residue protein sequence, read N- to C-terminus: Lipid droplet-associated hydrolase (325 aa).

Ser139 serves as the catalytic Nucleophile. Catalysis depends on charge relay system residues Asp271 and His300.

This sequence belongs to the AB hydrolase superfamily. LDAH family.

The protein localises to the lipid droplet. It is found in the endoplasmic reticulum. It catalyses the reaction a cholesterol ester + H2O = cholesterol + a fatty acid + H(+). Functionally, probable serine lipid hydrolase associated with lipid droplets. Has low cholesterol esterase activity. Appears to lack triglyceride lipase activity. Involved in cholesterol and triglyceride homeostasis; stimulates cellular triglyceride accumulation and cellular cholesterol release. Acts antagonistically with PNPLA2/ATGL in regulation of cellular lipid stores. May regulate triglyceride accumulation indirectly through stimulation of PNPLA2/ATGL ubiquitination and proteasomal degradation. Promotes microtubule-dependent lipid droplet fusion. Highly expressed in macrophage-rich areas in atherosclerotic lesions, suggesting that it could promote cholesterol ester turnover in macrophages. The chain is Lipid droplet-associated hydrolase from Pongo abelii (Sumatran orangutan).